Consider the following 556-residue polypeptide: Bifunctional methyltransferase (556 aa).

The interval 1–310 (MQYSIQKFLN…NRVIEISLIQ (310 aa)) is RF MTase. Residues 148-152 (GTGSG), aspartate 171, tryptophan 200, and asparagine 215 each bind S-adenosyl-L-methionine. 215–218 (NPPY) lines the substrate pocket. The segment at 313-556 (RSYARRIGKS…IITKIPPKSY (244 aa)) is tRNA MTase. Positions 348–399 (KNYNSCKIKSNYTKFNLEKSKESVSRGAERIKIREHLRTYKEDVANFSSSTS) are insert. The S-adenosyl-L-methionine site is built by glutamate 403, glutamate 428, asparagine 455, and aspartate 477. Aspartate 477 is an active-site residue. Substrate is bound by residues lysine 481 and aspartate 513.

In the C-terminal section; belongs to the class I-like SAM-binding methyltransferase superfamily. TrmB family. The protein in the N-terminal section; belongs to the protein N5-glutamine methyltransferase family. PrmC subfamily.

It catalyses the reaction L-glutaminyl-[peptide chain release factor] + S-adenosyl-L-methionine = N(5)-methyl-L-glutaminyl-[peptide chain release factor] + S-adenosyl-L-homocysteine + H(+). The catalysed reaction is guanosine(46) in tRNA + S-adenosyl-L-methionine = N(7)-methylguanosine(46) in tRNA + S-adenosyl-L-homocysteine. Methylates the class 1 translation termination release factors RF1/PrfA and RF2/PrfB on the glutamine residue of the universally conserved GGQ motif. In terms of biological role, catalyzes the formation of N(7)-methylguanine at position 46 (m7G46) in tRNA. The chain is Bifunctional methyltransferase (prmC/trmB) from Rickettsia bellii (strain RML369-C).